The following is a 270-amino-acid chain: Acyl-[acyl-carrier-protein]--UDP-N-acetylglucosamine O-acyltransferase (270 aa).

The protein belongs to the transferase hexapeptide repeat family. LpxA subfamily. As to quaternary structure, homotrimer.

It is found in the cytoplasm. It carries out the reaction a (3R)-hydroxyacyl-[ACP] + UDP-N-acetyl-alpha-D-glucosamine = a UDP-3-O-[(3R)-3-hydroxyacyl]-N-acetyl-alpha-D-glucosamine + holo-[ACP]. It participates in glycolipid biosynthesis; lipid IV(A) biosynthesis; lipid IV(A) from (3R)-3-hydroxytetradecanoyl-[acyl-carrier-protein] and UDP-N-acetyl-alpha-D-glucosamine: step 1/6. Involved in the biosynthesis of lipid A, a phosphorylated glycolipid that anchors the lipopolysaccharide to the outer membrane of the cell. This is Acyl-[acyl-carrier-protein]--UDP-N-acetylglucosamine O-acyltransferase from Helicobacter pylori (strain Shi470).